Here is a 384-residue protein sequence, read N- to C-terminus: Sialyltransferase-like protein 3 (384 aa).

Over 1–5 (MKRRH) the chain is Cytoplasmic. A helical; Signal-anchor for type II membrane protein transmembrane segment spans residues 6-26 (WSHPSCGLLLLVAVFCLLLVF). Residues 27–384 (RCSQLRHSGD…FRLPPVSFYR (358 aa)) lie on the Lumenal side of the membrane. N241 carries an N-linked (GlcNAc...) asparagine glycan.

This sequence belongs to the glycosyltransferase 29 family.

The protein resides in the golgi apparatus membrane. Possesses sialyltransferase-like activity in vitro. Transfers sialic acid to the glycoprotein asialofetuin. The transferred sialic acid is linked to galactose of Gal-beta-1,3-GalNAc through alpha-2,6-linkage. The polypeptide is Sialyltransferase-like protein 3 (Oryza sativa subsp. indica (Rice)).